The following is a 235-amino-acid chain: MYALSEKGERIRAMFGSIAPRYDLLNRLLSLGIDRRWRRFAVKKIGLNGAGRVLDVATGTGDVALEIASQTPASVSIVGIDFTPEMIELGRVKVKDSRHSGRITLEVAPCEEIPFDDGSFDAATISFGIRNVVDRIKGLTEMHRVLKGGGKIVILEFSTPTLPVFKDLYHFYFLKVLPKIGGAFSRFSAYQYLPDSVLEFPSRDVFKGMMTQVGFKDVRHFDLTGGIATVYVGTK.

Residues Thr60, Asp81, and Ser126 each coordinate S-adenosyl-L-methionine.

This sequence belongs to the class I-like SAM-binding methyltransferase superfamily. MenG/UbiE family.

The catalysed reaction is a 2-demethylmenaquinol + S-adenosyl-L-methionine = a menaquinol + S-adenosyl-L-homocysteine + H(+). It carries out the reaction a 2-methoxy-6-(all-trans-polyprenyl)benzene-1,4-diol + S-adenosyl-L-methionine = a 5-methoxy-2-methyl-3-(all-trans-polyprenyl)benzene-1,4-diol + S-adenosyl-L-homocysteine + H(+). Its pathway is quinol/quinone metabolism; menaquinone biosynthesis; menaquinol from 1,4-dihydroxy-2-naphthoate: step 2/2. It functions in the pathway cofactor biosynthesis; ubiquinone biosynthesis. In terms of biological role, methyltransferase required for the conversion of demethylmenaquinol (DMKH2) to menaquinol (MKH2) and the conversion of 2-polyprenyl-6-methoxy-1,4-benzoquinol (DDMQH2) to 2-polyprenyl-3-methyl-6-methoxy-1,4-benzoquinol (DMQH2). The chain is Ubiquinone/menaquinone biosynthesis C-methyltransferase UbiE from Geobacter sp. (strain M21).